Reading from the N-terminus, the 283-residue chain is Formamidopyrimidine-DNA glycosylase (283 aa).

Catalysis depends on Pro-2, which acts as the Schiff-base intermediate with DNA. Catalysis depends on Glu-3, which acts as the Proton donor. Lys-60 (proton donor; for beta-elimination activity) is an active-site residue. Positions 100, 119, and 164 each coordinate DNA. An FPG-type zinc finger spans residues 249 to 283 (WVYNRAGEPCKVCGDVIQRIKLGGRSSHFCRQCQV). Arg-273 acts as the Proton donor; for delta-elimination activity in catalysis.

This sequence belongs to the FPG family. In terms of assembly, monomer. Zn(2+) serves as cofactor.

It catalyses the reaction Hydrolysis of DNA containing ring-opened 7-methylguanine residues, releasing 2,6-diamino-4-hydroxy-5-(N-methyl)formamidopyrimidine.. The enzyme catalyses 2'-deoxyribonucleotide-(2'-deoxyribose 5'-phosphate)-2'-deoxyribonucleotide-DNA = a 3'-end 2'-deoxyribonucleotide-(2,3-dehydro-2,3-deoxyribose 5'-phosphate)-DNA + a 5'-end 5'-phospho-2'-deoxyribonucleoside-DNA + H(+). Involved in base excision repair of DNA damaged by oxidation or by mutagenic agents. Acts as a DNA glycosylase that recognizes and removes damaged bases. Has a preference for oxidized purines, such as 7,8-dihydro-8-oxoguanine (8-oxoG). Has AP (apurinic/apyrimidinic) lyase activity and introduces nicks in the DNA strand. Cleaves the DNA backbone by beta-delta elimination to generate a single-strand break at the site of the removed base with both 3'- and 5'-phosphates. This chain is Formamidopyrimidine-DNA glycosylase, found in Nostoc sp. (strain PCC 7120 / SAG 25.82 / UTEX 2576).